The following is a 233-amino-acid chain: Orotidine 5'-phosphate decarboxylase (233 aa).

Residues D11, K34, 61–70, T117, R179, Q188, G208, and R209 contribute to the substrate site; that span reads DLKLHDIPNT. The active-site Proton donor is K63.

The protein belongs to the OMP decarboxylase family. Type 1 subfamily. Homodimer.

The catalysed reaction is orotidine 5'-phosphate + H(+) = UMP + CO2. Its pathway is pyrimidine metabolism; UMP biosynthesis via de novo pathway; UMP from orotate: step 2/2. Catalyzes the decarboxylation of orotidine 5'-monophosphate (OMP) to uridine 5'-monophosphate (UMP). The polypeptide is Orotidine 5'-phosphate decarboxylase (Streptococcus pneumoniae serotype 4 (strain ATCC BAA-334 / TIGR4)).